The sequence spans 228 residues: DOPA 4,5-dioxygenase (228 aa).

In terms of assembly, homodimer. In terms of tissue distribution, expressed at high level in coloured cap tissue and at least 10 times lower level in the stipe.

The protein localises to the cytoplasm. The protein operates within pigment biosynthesis; betalain biosynthesis. In terms of biological role, extradiol dioxygenase that opens up the cyclic ring of DOPA between carbons 4 and 5 thus producing an unstable seco-DOPA that rearranges non-enzymatically to betalamic acid. Can also catalyze the formation of muscaflavin (a pigment found in the hygrocybe mushrooms family and of some amanita species only) by a 2,3-extradiol cleavage of DOPA. The sequence is that of DOPA 4,5-dioxygenase (DODA) from Amanita muscaria (Fly agaric).